Consider the following 356-residue polypeptide: Naringenin,2-oxoglutarate 3-dioxygenase (356 aa).

Residues 188–292 form the Fe2OG dioxygenase domain; that stretch reads CVDMDQKVVV…RLSIATFQNP (105 aa). The Fe cation site is built by histidine 215, aspartate 217, and histidine 273. Arginine 283 is a 2-oxoglutarate binding site.

This sequence belongs to the iron/ascorbate-dependent oxidoreductase family. Requires Fe(2+) as cofactor. L-ascorbate serves as cofactor.

It carries out the reaction a (2S)-flavan-4-one + 2-oxoglutarate + O2 = a (2R,3R)-dihydroflavonol + succinate + CO2. Its pathway is secondary metabolite biosynthesis; flavonoid biosynthesis. In terms of biological role, catalyzes the 3-beta-hydroxylation of 2S-flavanones to 2R,3R-dihydroflavonols which are intermediates in the biosynthesis of flavonols, anthocyanidins, catechins and proanthocyanidins in plants. This is Naringenin,2-oxoglutarate 3-dioxygenase (FHT) from Callistephus chinensis (China aster).